The primary structure comprises 287 residues: Beta-lactamase GES-2 (287 aa).

The first 18 residues, M1–A18, serve as a signal peptide directing secretion. An intrachain disulfide couples C63 to C233. S64 (nucleophile; acyl-ester intermediate) is an active-site residue. A beta-lactam-binding residues include K67, S125, and E161.

The protein belongs to the class-A beta-lactamase family.

The catalysed reaction is a beta-lactam + H2O = a substituted beta-amino acid. With respect to regulation, inhibited by the beta-lactamase-blocking agents clavulanic acid, sulbactam and tazobactam. Functionally, extended-spectrum beta-lactamase (ESBL) which confers resistance to penicillins, as well as first, third and fourth-generation cephalosporins. Has modest carbapenem-hydrolyzing activity. Has cefotaxime-hydrolyzing activity. In Pseudomonas aeruginosa, this protein is Beta-lactamase GES-2.